Here is a 416-residue protein sequence, read N- to C-terminus: Probable glucan 1,3-beta-glucosidase A (416 aa).

The signal sequence occupies residues 1-22 (MIFKFSQKALVALYLVVGLAEA). The Proton donor role is filled by Glu-211. 2 disulfides stabilise this stretch: Cys-291/Cys-415 and Cys-316/Cys-342. Catalysis depends on Glu-308, which acts as the Nucleophile. Asn-344 carries an N-linked (GlcNAc...) asparagine glycan.

Belongs to the glycosyl hydrolase 5 (cellulase A) family. In terms of assembly, monomer. It depends on Mn(2+) as a cofactor.

The protein localises to the secreted. The catalysed reaction is Successive hydrolysis of beta-D-glucose units from the non-reducing ends of (1-&gt;3)-beta-D-glucans, releasing alpha-glucose.. Functionally, beta-glucanases participate in the metabolism of beta-glucan, the main structural component of the cell wall. It could also function biosynthetically as a transglycosylase. This chain is Probable glucan 1,3-beta-glucosidase A (exgA), found in Aspergillus fumigatus (strain ATCC MYA-4609 / CBS 101355 / FGSC A1100 / Af293) (Neosartorya fumigata).